A 255-amino-acid polypeptide reads, in one-letter code: Electron transfer flavoprotein subunit beta (255 aa).

Position 2 is an N-acetylalanine (Ala-2). AMP-binding positions include Ala-9, 39-42 (NPFC), Cys-66, and 123-134 (GKQAIDDDCNQT). The recognition loop stretch occupies residues 183–205 (ADLRLNEPRYATLPNIMKAKKKK). Lys-200 is subject to N6,N6,N6-trimethyllysine; by ETFBKMT; alternate. An N6-acetyllysine; alternate modification is found at Lys-200. Lys-200 is subject to N6-methyllysine; alternate. An N6,N6,N6-trimethyllysine; by ETFBKMT modification is found at Lys-203. Lys-210 bears the N6-acetyllysine; alternate mark. Lys-210 bears the N6-succinyllysine; alternate mark. Ser-223 and Ser-226 each carry phosphoserine. At Lys-238 the chain carries N6-acetyllysine. Position 248 is an N6-acetyllysine; alternate (Lys-248). Lys-248 is modified (N6-succinyllysine; alternate).

It belongs to the ETF beta-subunit/FixA family. In terms of assembly, heterodimer composed of ETFA and ETFB. Identified in a complex that contains ETFA, ETFB and ETFRF1. Interacts with ACADM. Post-translationally, methylated. Trimethylation at Lys-200 and Lys-203 may negatively regulate the activity in electron transfer from acyl-CoA dehydrogenases.

It localises to the mitochondrion matrix. Its function is as follows. Heterodimeric electron transfer flavoprotein that accepts electrons from several mitochondrial dehydrogenases, including acyl-CoA dehydrogenases, glutaryl-CoA and sarcosine dehydrogenase. It transfers the electrons to the main mitochondrial respiratory chain via ETF-ubiquinone oxidoreductase. Required for normal mitochondrial fatty acid oxidation and normal amino acid metabolism. ETFB binds an AMP molecule that probably has a purely structural role. The protein is Electron transfer flavoprotein subunit beta of Bos taurus (Bovine).